Reading from the N-terminus, the 337-residue chain is 4-hydroxythreonine-4-phosphate dehydrogenase (337 aa).

Substrate-binding residues include histidine 139 and threonine 140. The a divalent metal cation site is built by histidine 173, histidine 218, and histidine 273. Substrate is bound by residues lysine 281, asparagine 290, and arginine 299.

This sequence belongs to the PdxA family. In terms of assembly, homodimer. It depends on Zn(2+) as a cofactor. The cofactor is Mg(2+). Co(2+) serves as cofactor.

Its subcellular location is the cytoplasm. It carries out the reaction 4-(phosphooxy)-L-threonine + NAD(+) = 3-amino-2-oxopropyl phosphate + CO2 + NADH. It functions in the pathway cofactor biosynthesis; pyridoxine 5'-phosphate biosynthesis; pyridoxine 5'-phosphate from D-erythrose 4-phosphate: step 4/5. In terms of biological role, catalyzes the NAD(P)-dependent oxidation of 4-(phosphooxy)-L-threonine (HTP) into 2-amino-3-oxo-4-(phosphooxy)butyric acid which spontaneously decarboxylates to form 3-amino-2-oxopropyl phosphate (AHAP). The protein is 4-hydroxythreonine-4-phosphate dehydrogenase of Rhodopseudomonas palustris (strain ATCC BAA-98 / CGA009).